Consider the following 45-residue polypeptide: MKVKASIKADPSKGDILVRRSGRLYVINKKDPNRKQRQKGPARKK.

Residues V26–K45 are disordered. Basic residues predominate over residues K35–K45.

It belongs to the bacterial ribosomal protein bL36 family.

The protein is Large ribosomal subunit protein bL36 of Protochlamydia amoebophila (strain UWE25).